The sequence spans 92 residues: Small ribosomal subunit protein uS19 (92 aa).

The protein belongs to the universal ribosomal protein uS19 family.

Protein S19 forms a complex with S13 that binds strongly to the 16S ribosomal RNA. The chain is Small ribosomal subunit protein uS19 from Rickettsia akari (strain Hartford).